Consider the following 658-residue polypeptide: Methionine--tRNA ligase (658 aa).

Positions 9 to 19 (PYANGKAHVGH) match the 'HIGH' region motif. Positions 140, 143, 152, and 156 each coordinate Zn(2+). The 'KMSKS' region signature appears at 322-326 (TFSKS). An ATP-binding site is contributed by K325. The region spanning 558–658 (DFQKLDIRIG…KEVEPGTRVC (101 aa)) is the tRNA-binding domain.

Belongs to the class-I aminoacyl-tRNA synthetase family. MetG type 1 subfamily. As to quaternary structure, homodimer. It depends on Zn(2+) as a cofactor.

It is found in the cytoplasm. The enzyme catalyses tRNA(Met) + L-methionine + ATP = L-methionyl-tRNA(Met) + AMP + diphosphate. Functionally, is required not only for elongation of protein synthesis but also for the initiation of all mRNA translation through initiator tRNA(fMet) aminoacylation. The protein is Methionine--tRNA ligase of Archaeoglobus fulgidus (strain ATCC 49558 / DSM 4304 / JCM 9628 / NBRC 100126 / VC-16).